Consider the following 425-residue polypeptide: Podosporapepsin (425 aa).

A signal peptide spans 1 to 28 (MVSLTDLFLASLLVPTSPWLCLPPRIDT). Residues 29–91 (IDQRGGRVTL…QEEAFARIKR (63 aa)) constitute a propeptide, activation peptide. The region spanning 108–419 (YVTPVTIGTP…GTNPPRIGFA (312 aa)) is the Peptidase A1 domain. Aspartate 126 is a catalytic residue. N-linked (GlcNAc...) asparagine glycans are attached at residues asparagine 184 and asparagine 273. The active site involves aspartate 310. A disulfide bridge connects residues cysteine 346 and cysteine 381. Residue asparagine 370 is glycosylated (N-linked (GlcNAc...) asparagine).

It belongs to the peptidase A1 family.

In Podospora anserina (Pleurage anserina), this protein is Podosporapepsin (PAPA).